The following is a 163-amino-acid chain: Urease accessory protein UreE (163 aa).

The disordered stretch occupies residues 144–163 (QPEPGAYGGSSAGSHDGHHH).

This sequence belongs to the UreE family.

It localises to the cytoplasm. Its function is as follows. Involved in urease metallocenter assembly. Binds nickel. Probably functions as a nickel donor during metallocenter assembly. The protein is Urease accessory protein UreE of Aliivibrio fischeri (strain MJ11) (Vibrio fischeri).